Here is a 181-residue protein sequence, read N- to C-terminus: ATP synthase subunit b, chloroplastic (181 aa).

Residues 31–50 traverse the membrane as a helical segment; it reads NVLNIAILLSGVVYLGRNFL.

The protein belongs to the ATPase B chain family. As to quaternary structure, F-type ATPases have 2 components, F(1) - the catalytic core - and F(0) - the membrane proton channel. F(1) has five subunits: alpha(3), beta(3), gamma(1), delta(1), epsilon(1). F(0) has four main subunits: a(1), b(1), b'(1) and c(10-14). The alpha and beta chains form an alternating ring which encloses part of the gamma chain. F(1) is attached to F(0) by a central stalk formed by the gamma and epsilon chains, while a peripheral stalk is formed by the delta, b and b' chains.

It localises to the plastid. The protein localises to the chloroplast thylakoid membrane. F(1)F(0) ATP synthase produces ATP from ADP in the presence of a proton or sodium gradient. F-type ATPases consist of two structural domains, F(1) containing the extramembraneous catalytic core and F(0) containing the membrane proton channel, linked together by a central stalk and a peripheral stalk. During catalysis, ATP synthesis in the catalytic domain of F(1) is coupled via a rotary mechanism of the central stalk subunits to proton translocation. Functionally, component of the F(0) channel, it forms part of the peripheral stalk, linking F(1) to F(0). This chain is ATP synthase subunit b, chloroplastic, found in Rhodomonas salina (Cryptomonas salina).